A 122-amino-acid polypeptide reads, in one-letter code: Large ribosomal subunit protein uL14 (122 aa).

Belongs to the universal ribosomal protein uL14 family. As to quaternary structure, part of the 50S ribosomal subunit. Forms a cluster with proteins L3 and L19. In the 70S ribosome, L14 and L19 interact and together make contacts with the 16S rRNA in bridges B5 and B8.

In terms of biological role, binds to 23S rRNA. Forms part of two intersubunit bridges in the 70S ribosome. The polypeptide is Large ribosomal subunit protein uL14 (Pseudothermotoga lettingae (strain ATCC BAA-301 / DSM 14385 / NBRC 107922 / TMO) (Thermotoga lettingae)).